The primary structure comprises 452 residues: Retinoid-inducible serine carboxypeptidase (452 aa).

The signal sequence occupies residues methionine 1 to glycine 26. N-linked (GlcNAc...) asparagine glycans are attached at residues asparagine 64 and asparagine 126. Serine 167 is an active-site residue. An N-linked (GlcNAc...) asparagine glycan is attached at asparagine 362. Residues aspartate 371 and histidine 431 contribute to the active site.

It belongs to the peptidase S10 family.

The protein resides in the secreted. May be involved in vascular wall and kidney homeostasis. In Homo sapiens (Human), this protein is Retinoid-inducible serine carboxypeptidase (SCPEP1).